The sequence spans 218 residues: MANVTLNVTDAKGQATGTVEAPEALFGVSAEDVQAHIPLIHQVVTAQLAAARQGTHATKTRGMVSGGGKKPWKQKGTGRARQGSIRAPQWYHGGTVFGPQPRDYSQRTPKKMKAAALRYALSDRANAGRVAVVEFGITEPSTKAAVAALAPITADKFTTVVFTRDNINEWLSVRNIPTVHPIFVDQLNTYDVITSQYVVFTKEAFEAFVAAKTEPKEA.

The segment at 55 to 83 (THATKTRGMVSGGGKKPWKQKGTGRARQG) is disordered.

It belongs to the universal ribosomal protein uL4 family. Part of the 50S ribosomal subunit.

Functionally, one of the primary rRNA binding proteins, this protein initially binds near the 5'-end of the 23S rRNA. It is important during the early stages of 50S assembly. It makes multiple contacts with different domains of the 23S rRNA in the assembled 50S subunit and ribosome. In terms of biological role, forms part of the polypeptide exit tunnel. This Bifidobacterium longum (strain DJO10A) protein is Large ribosomal subunit protein uL4.